The chain runs to 229 residues: Flavin-dependent thymidylate synthase (229 aa).

The ThyX domain maps to 1 to 217 (MEFKVLDKGF…PWTFESFLKF (217 aa)). Residues T55, 78–80 (RHR), and E86 each bind FAD. Residues 75–78 (QWFR), 86–90 (EASLR), and R156 contribute to the dUMP site. The ThyX motif signature appears at 78-88 (RHRIGSFNEAS). FAD-binding positions include 172–174 (NAR) and N178. R183 lines the dUMP pocket. The active-site Involved in ionization of N3 of dUMP, leading to its activation is R183.

It belongs to the thymidylate synthase ThyX family. Homotetramer. Requires FAD as cofactor.

It catalyses the reaction dUMP + (6R)-5,10-methylene-5,6,7,8-tetrahydrofolate + NADPH + H(+) = dTMP + (6S)-5,6,7,8-tetrahydrofolate + NADP(+). It functions in the pathway pyrimidine metabolism; dTTP biosynthesis. Functionally, catalyzes the reductive methylation of 2'-deoxyuridine-5'-monophosphate (dUMP) to 2'-deoxythymidine-5'-monophosphate (dTMP) while utilizing 5,10-methylenetetrahydrofolate (mTHF) as the methyl donor, and NADPH and FADH(2) as the reductant. This is Flavin-dependent thymidylate synthase from Thermosipho melanesiensis (strain DSM 12029 / CIP 104789 / BI429).